The following is a 269-amino-acid chain: MPGVETIKSSWADEVELDYGGLPPTTETIENGHKYVTEYKYNKDDKKTKVVRTYKISKQVVPKTVAKRRTWTKFGDSKNDKPGPNSQTTMVSEEIIMQFLNSKEDEKANDPLLDPSKNIAKCRICNGEHWSVNCPYKGTAMDTNLMEKKAAAAASAAVDAPKSGKYVPPFLKDSQKGGMGMRGRDDTAAIRISNLSESMTEADLEELVKKIGPQSKMYLARDKNTGLCKGFAYVHFKQRKDAAAAIEILNGHGYDHLILSVEWSKPQNN.

Residues 188 to 266 (AAIRISNLSE…LILSVEWSKP (79 aa)) form the RRM domain.

This sequence belongs to the eIF-3 subunit G family. In terms of assembly, component of the eukaryotic translation initiation factor 3 (eIF-3) complex. The eIF-3 complex interacts with pix.

It localises to the cytoplasm. Functionally, RNA-binding component of the eukaryotic translation initiation factor 3 (eIF-3) complex, which is involved in protein synthesis of a specialized repertoire of mRNAs and, together with other initiation factors, stimulates binding of mRNA and methionyl-tRNAi to the 40S ribosome. The eIF-3 complex specifically targets and initiates translation of a subset of mRNAs involved in cell proliferation. This subunit can bind 18S rRNA. The chain is Eukaryotic translation initiation factor 3 subunit G-1 from Drosophila virilis (Fruit fly).